Reading from the N-terminus, the 1153-residue chain is Otoancorin (1153 aa).

Positions 1–22 are cleaved as a signal peptide; sequence MSQEPTTYSLFLFLFLSHGVSS. An N-linked (GlcNAc...) asparagine glycan is attached at Asn-156. A glycan (N-linked (GlcNAc...) (complex) asparagine) is linked at Asn-211. Asn-244, Asn-289, Asn-321, Asn-394, Asn-398, Asn-460, Asn-544, Asn-812, Asn-911, and Asn-974 each carry an N-linked (GlcNAc...) asparagine glycan. The tract at residues 1109–1128 is disordered; the sequence is HSWQDAPASAGPTRTSSSRS. A lipid anchor (GPI-anchor amidated alanine) is attached at Ala-1130. A propeptide spans 1131–1153 (removed in mature form); that stretch reads GALQSWGLWLGCPLLVLMAKLLW.

The protein belongs to the stereocilin family.

It localises to the apical cell membrane. The protein localises to the secreted. The protein resides in the extracellular space. It is found in the extracellular matrix. Functionally, may act as an adhesion molecule. The sequence is that of Otoancorin (OTOA) from Homo sapiens (Human).